We begin with the raw amino-acid sequence, 154 residues long: Peptidoglycan amidase Tse1 (154 aa).

Residues Cys7 and Cys148 are joined by a disulfide bond. Residue Cys30 is the Nucleophile of the active site. The active-site Proton acceptor is the His91.

As to quaternary structure, forms a heterotetramer with Tsi1 consisting of two Tse1 dimers and two Tsi1 dimers. Formation of the complex inactivates Tse1 enzymatic activity.

It is found in the host membrane. It localises to the secreted. The enzyme catalyses Hydrolysis of gamma-D-glutamyl bonds to the L-terminus (position 7) of meso-diaminopimelic acid (meso-A2pm) in 7-(L-Ala-gamma-D-Glu)-meso-A2pm and 7-(L-Ala-gamma-D-Glu)-7-(D-Ala)-meso-A2pm. It is required that the D-terminal amino and carboxy groups of meso-A2pm are unsubstituted.. Functionally, toxin secreted by the H1 type VI (H1-T6SS) secretion system into the periplasm of recipient cells. Degrades peptidoglycan via amidase activity thereby helping itself to compete with other bacteria. To protect itself, the bacterium synthesizes immunity protein Tsi1 that specifically interacts with and inactivates cognate toxin. The sequence is that of Peptidoglycan amidase Tse1 from Pseudomonas aeruginosa (strain ATCC 15692 / DSM 22644 / CIP 104116 / JCM 14847 / LMG 12228 / 1C / PRS 101 / PAO1).